The chain runs to 95 residues: Large ribosomal subunit protein uL23 (95 aa).

This sequence belongs to the universal ribosomal protein uL23 family. In terms of assembly, part of the 50S ribosomal subunit. Contacts protein L29, and trigger factor when it is bound to the ribosome.

Functionally, one of the early assembly proteins it binds 23S rRNA. One of the proteins that surrounds the polypeptide exit tunnel on the outside of the ribosome. Forms the main docking site for trigger factor binding to the ribosome. In Solibacter usitatus (strain Ellin6076), this protein is Large ribosomal subunit protein uL23.